Reading from the N-terminus, the 95-residue chain is CRISPR-associated endoribonuclease Cas2 1 (95 aa).

Asp-11 contacts Mg(2+).

It belongs to the CRISPR-associated endoribonuclease Cas2 protein family. In terms of assembly, homodimer, forms a heterotetramer with a Cas1 homodimer. It depends on Mg(2+) as a cofactor.

CRISPR (clustered regularly interspaced short palindromic repeat), is an adaptive immune system that provides protection against mobile genetic elements (viruses, transposable elements and conjugative plasmids). CRISPR clusters contain sequences complementary to antecedent mobile elements and target invading nucleic acids. CRISPR clusters are transcribed and processed into CRISPR RNA (crRNA). Functions as a ssRNA-specific endoribonuclease. Involved in the integration of spacer DNA into the CRISPR cassette. In Methanospirillum hungatei JF-1 (strain ATCC 27890 / DSM 864 / NBRC 100397 / JF-1), this protein is CRISPR-associated endoribonuclease Cas2 1.